The chain runs to 303 residues: Glutathione transport system permease protein GsiD (303 aa).

Helical transmembrane passes span 40-60 (AMTAALFVILLIVVAIFARWI), 105-125 (LAAGVFAVFIGAAIGTLLGLL), 144-164 (LFAFPGILLAIAVVAVLGSGI), 165-185 (ANVIIAVAIFSIPAFARLVRG), 222-242 (IVVFFTMRIGTSIISAASLSF), and 266-286 (VIAPHVAVFPALAIFLTVLAF). The 190-residue stretch at 101–290 (AQISLAAGVF…LTVLAFNLLG (190 aa)) folds into the ABC transmembrane type-1 domain.

It belongs to the binding-protein-dependent transport system permease family. The complex is composed of two ATP-binding proteins (GsiA), two transmembrane proteins (GsiC and GsiD) and a solute-binding protein (GsiB).

It localises to the cell inner membrane. Its function is as follows. Part of the ABC transporter complex GsiABCD involved in glutathione import. Probably responsible for the translocation of the substrate across the membrane. The protein is Glutathione transport system permease protein GsiD of Escherichia coli O1:K1 / APEC.